The sequence spans 320 residues: Aspartate carbamoyltransferase catalytic subunit (320 aa).

Residues R68 and T69 each contribute to the carbamoyl phosphate site. Position 96 (K96) interacts with L-aspartate. The carbamoyl phosphate site is built by R118, H148, and Q151. Residues R181 and R236 each contribute to the L-aspartate site. Positions 277 and 278 each coordinate carbamoyl phosphate.

The protein belongs to the aspartate/ornithine carbamoyltransferase superfamily. ATCase family. In terms of assembly, heterododecamer (2C3:3R2) of six catalytic PyrB chains organized as two trimers (C3), and six regulatory PyrI chains organized as three dimers (R2).

The enzyme catalyses carbamoyl phosphate + L-aspartate = N-carbamoyl-L-aspartate + phosphate + H(+). It functions in the pathway pyrimidine metabolism; UMP biosynthesis via de novo pathway; (S)-dihydroorotate from bicarbonate: step 2/3. Its function is as follows. Catalyzes the condensation of carbamoyl phosphate and aspartate to form carbamoyl aspartate and inorganic phosphate, the committed step in the de novo pyrimidine nucleotide biosynthesis pathway. In Methylibium petroleiphilum (strain ATCC BAA-1232 / LMG 22953 / PM1), this protein is Aspartate carbamoyltransferase catalytic subunit.